The sequence spans 367 residues: MTSRNYLLLTPGPLTTSRTVKEAMLFDSCTWDDDYNIGVVEQIRQQLTELATASEGYTSVLLQGSGSYAVEAVLGSALGPQDKVLIVSNGAYGARMVEMAGLMGIAHHAYDCGEVARPDVQAIDAILNADPTISHIAMVHSETTTGMLNPIDEVGALAHRYGKTYIVDAMSSFGGIPMDIAALHIDYLISSANKCIQGVPGFAFVIAREQKLAACKGRSRSLSLDLYAQWRCMEDNHGKWRFTSPTHTVLAFAQALKELAKEGGVAARHQRYQQNQRSLVAGMRALGFNTLLDDELHSPIITAFYSPEDPQYRFSEFYRRLKEQGFVIYPGKVSQSDCFRIGNIGEVYAADITALLTAIRTAMYWTK.

K194 carries the post-translational modification N6-(pyridoxal phosphate)lysine.

It belongs to the class-V pyridoxal-phosphate-dependent aminotransferase family. PhnW subfamily. In terms of assembly, homodimer. Pyridoxal 5'-phosphate serves as cofactor.

It catalyses the reaction (2-aminoethyl)phosphonate + pyruvate = phosphonoacetaldehyde + L-alanine. In terms of biological role, involved in phosphonate degradation. In Salmonella paratyphi B (strain ATCC BAA-1250 / SPB7), this protein is 2-aminoethylphosphonate--pyruvate transaminase.